Here is a 473-residue protein sequence, read N- to C-terminus: Photosystem II CP43 reaction center protein (473 aa).

Positions 1-14 are excised as a propeptide; it reads MKTLYSLRRFYHVE. The residue at position 15 (Thr-15) is an N-acetylthreonine. Position 15 is a phosphothreonine (Thr-15). The next 5 helical transmembrane spans lie at 69-93, 134-155, 178-200, 255-275, and 291-312; these read LFEV…PHLA, LLGP…KDRN, KALY…RKIT, KPFA…LSYS, and WFNN…ASQA. Glu-367 is a binding site for [CaMn4O5] cluster. The chain crosses the membrane as a helical span at residues 447-471; it reads RARAAAAGFEKGIDRDFEPVLSMTP.

This sequence belongs to the PsbB/PsbC family. PsbC subfamily. As to quaternary structure, PSII is composed of 1 copy each of membrane proteins PsbA, PsbB, PsbC, PsbD, PsbE, PsbF, PsbH, PsbI, PsbJ, PsbK, PsbL, PsbM, PsbT, PsbX, PsbY, PsbZ, Psb30/Ycf12, at least 3 peripheral proteins of the oxygen-evolving complex and a large number of cofactors. It forms dimeric complexes. The cofactor is Binds multiple chlorophylls and provides some of the ligands for the Ca-4Mn-5O cluster of the oxygen-evolving complex. It may also provide a ligand for a Cl- that is required for oxygen evolution. PSII binds additional chlorophylls, carotenoids and specific lipids..

Its subcellular location is the plastid. It is found in the chloroplast thylakoid membrane. Functionally, one of the components of the core complex of photosystem II (PSII). It binds chlorophyll and helps catalyze the primary light-induced photochemical processes of PSII. PSII is a light-driven water:plastoquinone oxidoreductase, using light energy to abstract electrons from H(2)O, generating O(2) and a proton gradient subsequently used for ATP formation. This Ipomoea purpurea (Common morning glory) protein is Photosystem II CP43 reaction center protein.